The primary structure comprises 112 residues: T cell receptor alpha variable 34 (112 aa).

A signal peptide spans 1–21 (METVLQVLLGILGFQAAWVSS). The region spanning 22–112 (QELEQSPQSL…HAGIYLCGAD (91 aa)) is the Ig-like domain. Asparagine 38 and asparagine 42 each carry an N-linked (GlcNAc...) asparagine glycan. Residues cysteine 43 and cysteine 109 are joined by a disulfide bond.

In terms of assembly, alpha-beta TR is a heterodimer composed of an alpha and beta chain; disulfide-linked. The alpha-beta TR is associated with the transmembrane signaling CD3 coreceptor proteins to form the TR-CD3 (TcR or TCR). The assembly of alpha-beta TR heterodimers with CD3 occurs in the endoplasmic reticulum where a single alpha-beta TR heterodimer associates with one CD3D-CD3E heterodimer, one CD3G-CD3E heterodimer and one CD247 homodimer forming a stable octameric structure. CD3D-CD3E and CD3G-CD3E heterodimers preferentially associate with TR alpha and TR beta chains, respectively. The association of the CD247 homodimer is the last step of TcR assembly in the endoplasmic reticulum and is required for transport to the cell surface.

The protein localises to the cell membrane. In terms of biological role, v region of the variable domain of T cell receptor (TR) alpha chain that participates in the antigen recognition. Alpha-beta T cell receptors are antigen specific receptors which are essential to the immune response and are present on the cell surface of T lymphocytes. Recognize peptide-major histocompatibility (MH) (pMH) complexes that are displayed by antigen presenting cells (APC), a prerequisite for efficient T cell adaptive immunity against pathogens. Binding of alpha-beta TR to pMH complex initiates TR-CD3 clustering on the cell surface and intracellular activation of LCK that phosphorylates the ITAM motifs of CD3G, CD3D, CD3E and CD247 enabling the recruitment of ZAP70. In turn ZAP70 phosphorylates LAT, which recruits numerous signaling molecules to form the LAT signalosome. The LAT signalosome propagates signal branching to three major signaling pathways, the calcium, the mitogen-activated protein kinase (MAPK) kinase and the nuclear factor NF-kappa-B (NF-kB) pathways, leading to the mobilization of transcription factors that are critical for gene expression and essential for T cell growth and differentiation. The T cell repertoire is generated in the thymus, by V-(D)-J rearrangement. This repertoire is then shaped by intrathymic selection events to generate a peripheral T cell pool of self-MH restricted, non-autoaggressive T cells. Post-thymic interaction of alpha-beta TR with the pMH complexes shapes TR structural and functional avidity. In Homo sapiens (Human), this protein is T cell receptor alpha variable 34.